A 435-amino-acid chain; its full sequence is Enolase (435 aa).

Gln-163 contacts (2R)-2-phosphoglycerate. The Proton donor role is filled by Glu-205. Positions 243, 292, and 319 each coordinate Mg(2+). Residues Lys-344, Arg-373, Ser-374, and Lys-395 each coordinate (2R)-2-phosphoglycerate. Residue Lys-344 is the Proton acceptor of the active site.

This sequence belongs to the enolase family. Mg(2+) is required as a cofactor.

The protein localises to the cytoplasm. Its subcellular location is the secreted. It is found in the cell surface. It catalyses the reaction (2R)-2-phosphoglycerate = phosphoenolpyruvate + H2O. It functions in the pathway carbohydrate degradation; glycolysis; pyruvate from D-glyceraldehyde 3-phosphate: step 4/5. Its function is as follows. Catalyzes the reversible conversion of 2-phosphoglycerate (2-PG) into phosphoenolpyruvate (PEP). It is essential for the degradation of carbohydrates via glycolysis. In Streptococcus pyogenes serotype M12 (strain MGAS2096), this protein is Enolase.